The chain runs to 135 residues: MNRFQLLSKGLRLIHKMSEEALAGVPLVHISPEGIFKYVMINVIDGGDASKAVIRGFADCTWHADIFDREEEVFKKLGLRAECPGGGRIEHNPDKKYLKVYGYSQGFGKADHAQTKRILATKYPDYTIETSDEGY.

Substrate is bound at residue lysine 37. The Proton acceptor role is filled by histidine 63. A substrate-binding site is contributed by 104–106 (SQG).

This sequence belongs to the janus family.

In terms of biological role, janA and janB regulate somatic sex differentiation. The protein is Sex-regulated protein janus-A (janA) of Drosophila erecta (Fruit fly).